A 123-amino-acid polypeptide reads, in one-letter code: Ribosome-binding factor A (123 aa).

The protein belongs to the RbfA family. As to quaternary structure, monomer. Binds 30S ribosomal subunits, but not 50S ribosomal subunits or 70S ribosomes.

It localises to the cytoplasm. One of several proteins that assist in the late maturation steps of the functional core of the 30S ribosomal subunit. Associates with free 30S ribosomal subunits (but not with 30S subunits that are part of 70S ribosomes or polysomes). Required for efficient processing of 16S rRNA. May interact with the 5'-terminal helix region of 16S rRNA. The polypeptide is Ribosome-binding factor A (Ralstonia nicotianae (strain ATCC BAA-1114 / GMI1000) (Ralstonia solanacearum)).